Reading from the N-terminus, the 320-residue chain is tRNA-cytidine(32) 2-sulfurtransferase (320 aa).

Residues 54–59 (SGGKDS) carry the PP-loop motif motif. The [4Fe-4S] cluster site is built by Cys129, Cys132, and Cys220.

This sequence belongs to the TtcA family. In terms of assembly, homodimer. It depends on Mg(2+) as a cofactor. [4Fe-4S] cluster serves as cofactor.

Its subcellular location is the cytoplasm. It catalyses the reaction cytidine(32) in tRNA + S-sulfanyl-L-cysteinyl-[cysteine desulfurase] + AH2 + ATP = 2-thiocytidine(32) in tRNA + L-cysteinyl-[cysteine desulfurase] + A + AMP + diphosphate + H(+). Its pathway is tRNA modification. In terms of biological role, catalyzes the ATP-dependent 2-thiolation of cytidine in position 32 of tRNA, to form 2-thiocytidine (s(2)C32). The sulfur atoms are provided by the cysteine/cysteine desulfurase (IscS) system. In Bordetella pertussis (strain Tohama I / ATCC BAA-589 / NCTC 13251), this protein is tRNA-cytidine(32) 2-sulfurtransferase.